The following is a 77-amino-acid chain: Surfactant-associated protein 2 (77 aa).

The signal sequence occupies residues 1–19; it reads MESLMRLFLLLALLSSSHA. The N-linked (GlcNAc...) asparagine glycan is linked to N61.

N-glycosylated. As to expression, expressed in lung, and specifically in alveolar type II epithelial cells.

The protein resides in the secreted. The protein localises to the cytoplasmic vesicle. It is found in the secretory vesicle. It localises to the golgi apparatus. Putative surfactant protein. This Mus musculus (Mouse) protein is Surfactant-associated protein 2.